Reading from the N-terminus, the 217-residue chain is 8-oxoguanine DNA glycosylase/AP lyase (217 aa).

Active-site residues include K138 and D157.

This sequence belongs to the type-2 OGG1 family.

The catalysed reaction is 2'-deoxyribonucleotide-(2'-deoxyribose 5'-phosphate)-2'-deoxyribonucleotide-DNA = a 3'-end 2'-deoxyribonucleotide-(2,3-dehydro-2,3-deoxyribose 5'-phosphate)-DNA + a 5'-end 5'-phospho-2'-deoxyribonucleoside-DNA + H(+). In terms of biological role, catalyzes the excision of an oxidatively damaged form of guanine (7,8-dihydro-8-oxoguanine = 8-oxoG) from DNA. Also cleaves the DNA backbone at apurinic/apyrimidinic sites (AP sites). This is 8-oxoguanine DNA glycosylase/AP lyase from Fusobacterium nucleatum subsp. nucleatum (strain ATCC 25586 / DSM 15643 / BCRC 10681 / CIP 101130 / JCM 8532 / KCTC 2640 / LMG 13131 / VPI 4355).